Reading from the N-terminus, the 307-residue chain is Homoserine O-acetyltransferase (307 aa).

Catalysis depends on Cys142, which acts as the Acyl-thioester intermediate. Residues Lys163 and Ser192 each contribute to the substrate site. His235 serves as the catalytic Proton acceptor. Glu237 is an active-site residue. Arg249 contributes to the substrate binding site.

This sequence belongs to the MetA family.

The protein localises to the cytoplasm. It catalyses the reaction L-homoserine + acetyl-CoA = O-acetyl-L-homoserine + CoA. It participates in amino-acid biosynthesis; L-methionine biosynthesis via de novo pathway; O-acetyl-L-homoserine from L-homoserine: step 1/1. Functionally, transfers an acetyl group from acetyl-CoA to L-homoserine, forming acetyl-L-homoserine. This is Homoserine O-acetyltransferase from Desulfitobacterium hafniense (strain Y51).